The chain runs to 195 residues: Large ribosomal subunit protein bL32m (195 aa).

Residues cysteine 95, cysteine 98, cysteine 108, and cysteine 111 each coordinate Zn(2+).

Belongs to the bacterial ribosomal protein bL32 family. Component of the mitochondrial large ribosomal subunit (mt-LSU).

It is found in the mitochondrion. Its function is as follows. Component of the mitochondrial large ribosomal subunit (mt-LSU). The mitochondrial ribosome (mitoribosome) is a large ribonucleoprotein complex responsible for the synthesis of proteins inside mitochondria. The protein is Large ribosomal subunit protein bL32m (mRpL32) of Drosophila melanogaster (Fruit fly).